The sequence spans 253 residues: Imidazole glycerol phosphate synthase subunit HisF (253 aa).

Active-site residues include D11 and D130.

Belongs to the HisA/HisF family. Heterodimer of HisH and HisF.

The protein localises to the cytoplasm. The catalysed reaction is 5-[(5-phospho-1-deoxy-D-ribulos-1-ylimino)methylamino]-1-(5-phospho-beta-D-ribosyl)imidazole-4-carboxamide + L-glutamine = D-erythro-1-(imidazol-4-yl)glycerol 3-phosphate + 5-amino-1-(5-phospho-beta-D-ribosyl)imidazole-4-carboxamide + L-glutamate + H(+). It functions in the pathway amino-acid biosynthesis; L-histidine biosynthesis; L-histidine from 5-phospho-alpha-D-ribose 1-diphosphate: step 5/9. Functionally, IGPS catalyzes the conversion of PRFAR and glutamine to IGP, AICAR and glutamate. The HisF subunit catalyzes the cyclization activity that produces IGP and AICAR from PRFAR using the ammonia provided by the HisH subunit. The protein is Imidazole glycerol phosphate synthase subunit HisF of Cereibacter sphaeroides (strain ATCC 17029 / ATH 2.4.9) (Rhodobacter sphaeroides).